We begin with the raw amino-acid sequence, 157 residues long: Protein Smg (157 aa).

Belongs to the Smg family.

The chain is Protein Smg from Buchnera aphidicola subsp. Acyrthosiphon pisum (strain 5A).